The sequence spans 760 residues: Transferrin receptor protein 1 (760 aa).

Over 1-65 (MMDQARSAFS…VTKPKRCGGS (65 aa)) the chain is Cytoplasmic. The segment at 1 to 67 (MMDQARSAFS…KPKRCGGSIC (67 aa)) is mediates interaction with SH3BP4. Phosphoserine is present on residues serine 10 and serine 19. Tyrosine 20 is subject to Phosphotyrosine. Residues 20-23 (YTRF) carry the Endocytosis signal motif. At threonine 21 the chain carries Phosphothreonine. The residue at position 24 (serine 24) is a Phosphoserine. Positions 58 to 61 (KPKR) match the Stop-transfer sequence motif. Residues cysteine 62 and cysteine 67 are each lipidated (S-palmitoyl cysteine). The helical; Signal-anchor for type II membrane protein transmembrane segment at 66–86 (ICYGTIAVIIFFLIGFMIGYL) threads the bilayer. Topologically, residues 87–760 (GYCKGVEPKT…GDVWDIDNEF (674 aa)) are extracellular. A PA domain is found at 223-313 (SKAATVTGKL…GTGDPYTPGF (91 aa)). 2 N-linked (GlcNAc...) asparagine glycosylation sites follow: asparagine 251 and asparagine 317. The segment at 569–760 (TMDTYKELTE…GDVWDIDNEF (192 aa)) is ligand-binding. The short motif at 646-648 (RGD) is the Cell attachment site element. Residues asparagine 722 and asparagine 727 are each glycosylated (N-linked (GlcNAc...) asparagine).

It belongs to the peptidase M28 family. M28B subfamily. In terms of assembly, homodimer; disulfide-linked. Binds one transferrin or HFE molecule per subunit. Interacts with SH3BP4. Interacts with STEAP3; facilitates TFRC endocytosis in erythroid precursor cells. Post-translationally, stearoylated by ZDHHC6 which inhibits TFRC-mediated activation of the JNK pathway and promotes mitochondrial fragmentation. Stearoylation does not affect iron uptake.

The protein localises to the cell membrane. Its subcellular location is the melanosome. Cellular uptake of iron occurs via receptor-mediated endocytosis of ligand-occupied transferrin receptor into specialized endosomes. Endosomal acidification leads to iron release. The apotransferrin-receptor complex is then recycled to the cell surface with a return to neutral pH and the concomitant loss of affinity of apotransferrin for its receptor. Transferrin receptor is necessary for development of erythrocytes and the nervous system. Positively regulates T and B cell proliferation through iron uptake. Acts as a lipid sensor that regulates mitochondrial fusion by regulating activation of the JNK pathway. When dietary levels of stearate (C18:0) are low, promotes activation of the JNK pathway, resulting in HUWE1-mediated ubiquitination and subsequent degradation of the mitofusin MFN2 and inhibition of mitochondrial fusion. When dietary levels of stearate (C18:0) are high, TFRC stearoylation inhibits activation of the JNK pathway and thus degradation of the mitofusin MFN2. Mediates uptake of NICOL1 into fibroblasts where it may regulate extracellular matrix production. In Pongo abelii (Sumatran orangutan), this protein is Transferrin receptor protein 1 (TFRC).